We begin with the raw amino-acid sequence, 63 residues long: Defensin-like protein 278 (63 aa).

An N-terminal signal peptide occupies residues 1 to 15 (MSLVYMYMYIGVVMS). 3 disulfides stabilise this stretch: Cys31–Cys48, Cys37–Cys53, and Cys41–Cys55.

Belongs to the DEFL family.

The protein localises to the secreted. The polypeptide is Defensin-like protein 278 (Arabidopsis thaliana (Mouse-ear cress)).